The chain runs to 163 residues: Protein NAG1 (163 aa).

The helical transmembrane segment at 76-96 (ACFSVRIVLPLSLTISISALM) threads the bilayer.

It is found in the membrane. Its function is as follows. Involved in yeast cell wall biogenesis. The protein is Protein NAG1 (NAG1) of Saccharomyces cerevisiae (strain ATCC 204508 / S288c) (Baker's yeast).